The primary structure comprises 485 residues: MEKSKNIWSLILTEIKKELSEEEFYVWFENLCFLESVGDNIKISTPNLFHKNQIEKRFTKKIKEILTNNGYDNVTIVFTNQSPKTYSSKEESEKTTFNETFPTLDKLKGTTLSKEPLQSIKDRIKMYIKKEEEPKNFKNPFLKKRYTFENFIIGPNNKLAYNASLSISKNPGTKYNPCLIYGGVGLGKTHLLQSIGNKTEELHNNLKILYVTAENFLNEFVESIKTHETKKFKKKYRYLDMLLIDDIHDLQKKEGIQEELFHTFNALYEDNKQLVFTCDRPPSELTNFTDRLKSRFTRGLNVDISKPNFELRVAIIEKKAEEDGIKVPKNILNLVAQKVTTNVRDLEAAVTKLKAYIDLDNIEIDIDIVEKIIKEIIIYEKETTNEPSNKINIENIKKILLRELKIAHKDIEGHSKKPEITKARHIYAYLLRNFTELSTIEIGKIIGGKTHSTVLYSINKIDRDRNKDKEINNLITELMNKIKKN.

The segment at 1–74 (MEKSKNIWSL…ILTNNGYDNV (74 aa)) is domain I, interacts with DnaA modulators. The segment at 74–140 (VTIVFTNQSP…EEEPKNFKNP (67 aa)) is domain II. The tract at residues 141-357 (FLKKRYTFEN…AAVTKLKAYI (217 aa)) is domain III, AAA+ region. ATP contacts are provided by glycine 185, glycine 187, lysine 188, and threonine 189. The domain IV, binds dsDNA stretch occupies residues 358–485 (DLDNIEIDID…TELMNKIKKN (128 aa)).

It belongs to the DnaA family. In terms of assembly, oligomerizes as a right-handed, spiral filament on DNA at oriC.

The protein resides in the cytoplasm. Functionally, plays an essential role in the initiation and regulation of chromosomal replication. ATP-DnaA binds to the origin of replication (oriC) to initiate formation of the DNA replication initiation complex once per cell cycle. Binds the DnaA box (a 9 base pair repeat at the origin) and separates the double-stranded (ds)DNA. Forms a right-handed helical filament on oriC DNA; dsDNA binds to the exterior of the filament while single-stranded (ss)DNA is stabiized in the filament's interior. The ATP-DnaA-oriC complex binds and stabilizes one strand of the AT-rich DNA unwinding element (DUE), permitting loading of DNA polymerase. After initiation quickly degrades to an ADP-DnaA complex that is not apt for DNA replication. Binds acidic phospholipids. The sequence is that of Chromosomal replication initiator protein DnaA from Borreliella afzelii (strain PKo) (Borrelia afzelii).